Reading from the N-terminus, the 71-residue chain is uncharacterized protein (71 aa).

The N-terminal stretch at 1–19 (MFLFPSLLSSFCITLRSIS) is a signal peptide.

This is an uncharacterized protein from Pasteurella multocida (strain Pm70).